A 322-amino-acid chain; its full sequence is Cyclin mcs2 (322 aa).

The residue at position 310 (Ser310) is a Phosphoserine.

Belongs to the cyclin family. Cyclin C subfamily. In terms of assembly, one of the nine subunits forming the core-TFIIH basal transcription factor. Interacts with crk1 and skp1.

The protein localises to the nucleus. In terms of biological role, essential for progression through the cell cycle. Possesses kinase activity that can be detected when myelin basic protein (MBP) is provided as an exogenous substrate. In Schizosaccharomyces pombe (strain 972 / ATCC 24843) (Fission yeast), this protein is Cyclin mcs2 (mcs2).